Consider the following 309-residue polypeptide: Taste receptor type 2 member 124 (309 aa).

Topologically, residues 1 to 7 (MVSVLHS) are extracellular. A helical transmembrane segment spans residues 8–28 (ISTIIIIAEFVWGNLSNGLIV). The Cytoplasmic portion of the chain corresponds to 29-46 (LKNCLDWINIKELSTLDQ). The helical transmembrane segment at 47 to 67 (ILILLAISRISLIWETLLMWV) threads the bilayer. The Extracellular portion of the chain corresponds to 68-81 (KDKLISSITIEELK). The helical transmembrane segment at 82 to 102 (MIMFSFMLSSHFSLWLATALS) threads the bilayer. Residues 103-127 (TFYLFRIANCSWQIFLYLKWRLKHL) lie on the Cytoplasmic side of the membrane. The helical transmembrane segment at 128-148 (IVQMLLGSVMFLIANIIQITI) threads the bilayer. Over 149–182 (TLEKRFYQYKGNTSVNSIQNEFALLIEMMLFNMT) the chain is Extracellular. N-linked (GlcNAc...) asparagine glycans are attached at residues Asn160 and Asn180. Residues 183 to 203 (IFSVIPFLLALISFFLLIFSL) form a helical membrane-spanning segment. Residues 204–227 (WKHLQRMQLNSREDRDPSTKAHRN) lie on the Cytoplasmic side of the membrane. A helical transmembrane segment spans residues 228–248 (ALGIMVSFLLLYTMYVLSLLI). Residues 249 to 261 (SWIAQKNQSELVH) lie on the Extracellular side of the membrane. Asn255 carries N-linked (GlcNAc...) asparagine glycosylation. The chain crosses the membrane as a helical span at residues 262–282 (IICMITSLLNPSVHSSILILG). Topologically, residues 283 to 309 (NFKLKQSSLCILRHLGCRLKSQNTPTT) are cytoplasmic.

The protein belongs to the G-protein coupled receptor T2R family.

The protein localises to the membrane. In terms of biological role, putative taste receptor which may play a role in the perception of bitterness. In Rattus norvegicus (Rat), this protein is Taste receptor type 2 member 124.